The primary structure comprises 120 residues: UPF0342 protein Csac_0863 (120 aa).

Belongs to the UPF0342 family.

In Caldicellulosiruptor saccharolyticus (strain ATCC 43494 / DSM 8903 / Tp8T 6331), this protein is UPF0342 protein Csac_0863.